Consider the following 108-residue polypeptide: uncharacterized protein (108 aa).

This is an uncharacterized protein from Methanocaldococcus jannaschii (strain ATCC 43067 / DSM 2661 / JAL-1 / JCM 10045 / NBRC 100440) (Methanococcus jannaschii).